The sequence spans 764 residues: A-type ATP synthase subunit A (764 aa).

Belongs to the ATPase alpha/beta chains family. In terms of assembly, has multiple subunits with at least A(3), B(3), C, D, E, F, H, I and proteolipid K(x). In terms of processing, this protein undergoes a protein self splicing that involves a post-translational excision of the VDE intervening region (intein) followed by peptide ligation.

It localises to the cell membrane. It carries out the reaction ATP + H2O + 4 H(+)(in) = ADP + phosphate + 5 H(+)(out). In terms of biological role, component of the A-type ATP synthase that produces ATP from ADP in the presence of a proton gradient across the membrane. The A chain is the catalytic subunit. This chain is A-type ATP synthase subunit A, found in Thermoplasma acidophilum (strain ATCC 25905 / DSM 1728 / JCM 9062 / NBRC 15155 / AMRC-C165).